Reading from the N-terminus, the 679-residue chain is MSSEVTPKVPERPSRRKTSELFPLSGSESGDIEANSEPPTPAGTPNVPTRRPILKAKTMTSFESGMDQESLPKVPLQRPVRRSTTEELNNVMNNTSKELEEIESLISKHNIHNVSRKKSPTSVEEGKVAAIHQNGQRSASDNKTSTNPSPLEKNEHEGAEGNEFAISPSNLVNKSNNEVTEHSDSEDLTEKQKVHAALDNEAGDRSHFEEKLIPGDMKVQVDVSKDVEEGSLNALPPSGITESDDKAEKFTKHPESSLEELQKHQEQQEEKIFQNPTDEESTTSLNEKQEGKDNMEVNSQPQGPSDTETVIAATSSNVPSQIASEEENDVPVIPRSRPKKDFEAHVQKEELPNTQEKRVSEECDSTLISTEEESKIPKIPSERPKRRAPPPVPKKPSSRIAAFQEMLQKQQQQDLHNNGNSSATTASADIAKKHTDSSITSDTTKADFTSKLNGLFALPGMVNPGQLPPSLEKKLSSPDTESKLGPQDQSQAKTGPLGGTRRGRGPRGRKLPSKVASVEKIEEDDNTNKIEIFNNWNVSSSFSKEKVLIDTTPGEQAERALDEKSKSIPEEQREQSPNKMEAALCPFELDEKEKLPANAESDPLSQLPQTNTVGNRKAISEESLSPSEAIANRDQNDTTEIQEQQMEDQMEVDMERELSGGYEDVDSALHSEEASFHSL.

Positions Met-1–Thr-85 are disordered. The segment covering Val-9 to Ser-19 has biased composition (basic and acidic residues). Residue Thr-18 is modified to Phosphothreonine. The residue at position 36 (Ser-36) is a Phosphoserine. The residue at position 58 (Thr-58) is a Phosphothreonine. Ser-70 carries the phosphoserine modification. A Phosphothreonine modification is found at Thr-85. At Ser-104 the chain carries Phosphoserine. Disordered regions lie at residues Ile-111 to Glu-522, Ile-549 to Met-580, and Glu-593 to Leu-679. Composition is skewed to polar residues over residues Gln-133–Ser-149 and Ser-167–Glu-178. Residues Val-179–Ile-213 are compositionally biased toward basic and acidic residues. Phosphoserine is present on residues Ser-183, Ser-206, and Ser-231. Positions Ser-243–Ile-272 are enriched in basic and acidic residues. At Thr-277 the chain carries Phosphothreonine. Position 284 is a phosphoserine (Ser-284). Over residues Glu-296–Ala-323 the composition is skewed to polar residues. Ser-324 carries the phosphoserine modification. Composition is skewed to basic and acidic residues over residues Lys-339–Glu-361 and Glu-372–Arg-383. Residues Arg-383–Pro-396 form an interaction with SH3 domain of ABP1 region. Composition is skewed to polar residues over residues Asp-414 to Ser-427 and Ser-437 to Leu-452. A compositionally biased stretch (basic and acidic residues) spans Leu-471 to Ser-482. Residues Arg-501–Pro-512 show a composition bias toward basic residues. Thr-552 bears the Phosphothreonine mark. The segment covering Gln-556–Ser-576 has biased composition (basic and acidic residues). Position 576 is a phosphoserine (Ser-576). Over residues Pro-603–Gly-614 the composition is skewed to polar residues. Ser-620, Ser-623, Ser-625, Ser-627, Ser-667, Ser-671, Ser-675, and Ser-678 each carry phosphoserine. Residues Ser-667–Leu-679 are compositionally biased toward basic and acidic residues.

The protein belongs to the AIM21 family. As to quaternary structure, interacts with ribosomes. Interacts with ABP1.

Its subcellular location is the cytoplasm. The protein resides in the cytoskeleton. It localises to the actin patch. Functionally, involved in mitochondrial migration along actin filaments. The chain is Altered inheritance of mitochondria protein 21 (AIM21) from Saccharomyces cerevisiae (strain JAY291) (Baker's yeast).